The chain runs to 318 residues: L-lactate dehydrogenase (318 aa).

Residues valine 18, aspartate 39, lysine 44, tyrosine 69, and 83 to 84 (GA) each bind NAD(+). Substrate is bound by residues glutamine 86 and arginine 92. NAD(+) contacts are provided by residues serine 105, 122–124 (VSN), and serine 147. 124–127 (NPVD) contacts substrate. A substrate-binding site is contributed by 152 to 155 (DTSR). The active-site Proton acceptor is histidine 179. The residue at position 225 (tyrosine 225) is a Phosphotyrosine. Threonine 234 provides a ligand contact to substrate.

This sequence belongs to the LDH/MDH superfamily. LDH family. Homotetramer.

It is found in the cytoplasm. The catalysed reaction is (S)-lactate + NAD(+) = pyruvate + NADH + H(+). The protein operates within fermentation; pyruvate fermentation to lactate; (S)-lactate from pyruvate: step 1/1. Functionally, catalyzes the conversion of lactate to pyruvate. The chain is L-lactate dehydrogenase from Clostridium botulinum (strain Kyoto / Type A2).